Consider the following 72-residue polypeptide: uncharacterized protein (72 aa).

A helical transmembrane segment spans residues 33-53 (VCIFFSLIFFFFFFFFCVNWG).

It is found in the membrane. This is an uncharacterized protein from Dictyostelium discoideum (Social amoeba).